We begin with the raw amino-acid sequence, 504 residues long: ADP,ATP carrier protein 3 (504 aa).

Transmembrane regions (helical) follow at residues 23-43, 59-79, 90-110, 146-166, 183-203, 230-250, 296-316, 329-349, 364-384, 386-406, 449-469, and 473-493; these read LKLFIPMALMMLCILFNFGAL, IISFLKLWLVLPACVIFTILY, YVFYIIVGSFLLFFLFFAYII, YGLMYIFAELWSAVVINLMFW, PVLGMVGNIGLILAGSVLVFF, EMLQPIMSIIVAAGVISMLLF, IALLIICYGLLINIVEGPWKA, VHFMGRFNILMGISCVTFMII, LLTPIMLSITGLMFFIFIIFI, EIGSCFGNFNLLYAAIIVGAI, FGKSLGAFIQSLIFIIIPTAT, and IIIYLLVIFIVMISLWIWDVV.

This sequence belongs to the ADP/ATP translocase tlc family.

It is found in the cell membrane. In terms of biological role, provides the rickettsial cell with host ATP in exchange for rickettsial ADP. This is an obligate exchange system. This energy acquiring activity is an important component of rickettsial parasitism. In Rickettsia bellii (strain RML369-C), this protein is ADP,ATP carrier protein 3 (tlcC).